The sequence spans 194 residues: dCTP deaminase, dUMP-forming (194 aa).

Residues 105-110 (RSSMGR), D123, 131-133 (TLE), Q152, Y166, K174, and Q178 contribute to the dCTP site. The active-site Proton donor/acceptor is the E133.

It belongs to the dCTP deaminase family. Homotrimer.

It carries out the reaction dCTP + 2 H2O = dUMP + NH4(+) + diphosphate. Its pathway is pyrimidine metabolism; dUMP biosynthesis; dUMP from dCTP: step 1/1. Bifunctional enzyme that catalyzes both the deamination of dCTP to dUTP and the hydrolysis of dUTP to dUMP without releasing the toxic dUTP intermediate. This chain is dCTP deaminase, dUMP-forming, found in Methanobrevibacter smithii (strain ATCC 35061 / DSM 861 / OCM 144 / PS).